The following is a 405-amino-acid chain: Acetylornithine/succinyldiaminopimelate aminotransferase (405 aa).

Pyridoxal 5'-phosphate is bound by residues 108–109 (GT) and F141. R144 is a binding site for N(2)-acetyl-L-ornithine. 226-229 (DEVQ) lines the pyridoxal 5'-phosphate pocket. Position 255 is an N6-(pyridoxal phosphate)lysine (K255). S283 serves as a coordination point for N(2)-acetyl-L-ornithine. T284 lines the pyridoxal 5'-phosphate pocket.

Belongs to the class-III pyridoxal-phosphate-dependent aminotransferase family. ArgD subfamily. As to quaternary structure, homodimer. Pyridoxal 5'-phosphate is required as a cofactor.

The protein resides in the cytoplasm. The catalysed reaction is N(2)-acetyl-L-ornithine + 2-oxoglutarate = N-acetyl-L-glutamate 5-semialdehyde + L-glutamate. It carries out the reaction N-succinyl-(2S,6S)-2,6-diaminopimelate + 2-oxoglutarate = (S)-2-succinylamino-6-oxoheptanedioate + L-glutamate. It participates in amino-acid biosynthesis; L-arginine biosynthesis; N(2)-acetyl-L-ornithine from L-glutamate: step 4/4. It functions in the pathway amino-acid biosynthesis; L-lysine biosynthesis via DAP pathway; LL-2,6-diaminopimelate from (S)-tetrahydrodipicolinate (succinylase route): step 2/3. With respect to regulation, inhibited by gabaculine (Gcn). Involved in both the arginine and lysine biosynthetic pathways. The protein is Acetylornithine/succinyldiaminopimelate aminotransferase of Salmonella typhimurium (strain LT2 / SGSC1412 / ATCC 700720).